The following is a 449-amino-acid chain: UNC93-like protein MFSD11 (449 aa).

The helical transmembrane segment at 8–28 (LFNIIILGVAFMFMFTAFQTC) threads the bilayer. Asn-40 carries an N-linked (GlcNAc...) asparagine glycan. 5 helical membrane passes run 53 to 73 (AIIYGVFSASNLITPSVVAIV), 74 to 94 (GPQLSMFASGLFYSMYIAVFI), 96 to 116 (PFPWSFYTASVFIGIAAAVLW), 138 to 158 (IFWALLQSSLFFGNLYIYFAW), and 170 to 190 (RTVFIALTVISLVGTVLFFLI). Position 204 is a phosphoserine (Ser-204). Helical transmembrane passes span 239-259 (MLLLSITTAYTGLELTFFSGV), 277-297 (LIGLSGIFIGIGEILGGSLFG), 309-329 (PVVLLGILVHFIAFYLIFLNM), 359-379 (FLLGLGDSCFNTQLLSILGFL), 385-405 (APAFAIFKFVQSICAAVAFFY), and 410-430 (LLHWQLLVMVIFGFFGTISFF).

Belongs to the unc-93 family.

The protein resides in the membrane. The protein is UNC93-like protein MFSD11 (MFSD11) of Homo sapiens (Human).